The sequence spans 1129 residues: Inositol hexakisphosphate and diphosphoinositol-pentakisphosphate kinase 2 (1129 aa).

At Ser-44 the chain carries Phosphoserine. Residue 59-60 (KK) participates in substrate binding. Positions 140, 193, 200, and 219 each coordinate ATP. Substrate is bound at residue 219 to 220 (RK). Residue Ser-229 is modified to Phosphoserine. ATP-binding positions include 243–246 (EEFM) and 252–254 (DVK). 2 residues coordinate substrate: Lys-254 and Arg-268. Residues Ser-270, Asp-315, and 327–329 (DVN) contribute to the ATP site. 332–335 (SFVK) contributes to the substrate binding site. The tract at residues 377-448 (PTTSGTMMEL…VLDIARQLLM (72 aa)) is polyphosphoinositide-binding domain. The interval 904 to 945 (KGCEEDKNLPSGYGYRPASRENEGRRSLKTDDDEPHTSKRDE) is disordered. Over residues 921 to 945 (ASRENEGRRSLKTDDDEPHTSKRDE) the composition is skewed to basic and acidic residues. Phosphoserine is present on residues Ser-1051, Ser-1058, and Ser-1066. A disordered region spans residues 1070–1129 (YTPTKILPTPPAALKSSKASSKAAAGGPSQAMAPHTSSRKKSINSKTEGHEPKKSTGKKR). Residues 1081-1098 (AALKSSKASSKAAAGGPS) are compositionally biased toward low complexity. 2 positions are modified to phosphoserine: Ser-1106 and Ser-1107.

The protein belongs to the histidine acid phosphatase family. VIP1 subfamily. Ubiquitously expressed. Expressed in the cochlear and vestibular sensory hair cells, supporting cells and spiral ganglion neurons.

It is found in the cytoplasm. Its subcellular location is the cytosol. It carries out the reaction 1D-myo-inositol hexakisphosphate + ATP = 1-diphospho-1D-myo-inositol 2,3,4,5,6-pentakisphosphate + ADP. The enzyme catalyses 5-diphospho-1D-myo-inositol 1,2,3,4,6-pentakisphosphate + ATP + H(+) = 1,5-bis(diphospho)-1D-myo-inositol 2,3,4,6-tetrakisphosphate + ADP. Bifunctional inositol kinase that acts in concert with the IP6K kinases IP6K1, IP6K2 and IP6K3 to synthesize the diphosphate group-containing inositol pyrophosphates diphosphoinositol pentakisphosphate, PP-InsP5, and bis-diphosphoinositol tetrakisphosphate, (PP)2-InsP4. PP-InsP5 and (PP)2-InsP4, also respectively called InsP7 and InsP8, regulate a variety of cellular processes, including apoptosis, vesicle trafficking, cytoskeletal dynamics, exocytosis, insulin signaling and neutrophil activation. Phosphorylates inositol hexakisphosphate (InsP6) at position 1 to produce PP-InsP5 which is in turn phosphorylated by IP6Ks to produce (PP)2-InsP4. Alternatively, phosphorylates PP-InsP5 at position 1, produced by IP6Ks from InsP6, to produce (PP)2-InsP4. Required for normal hearing. The polypeptide is Inositol hexakisphosphate and diphosphoinositol-pentakisphosphate kinase 2 (Mus musculus (Mouse)).